The chain runs to 315 residues: DNA-directed RNA polymerase subunit alpha (315 aa).

Residues 1–228 (MLEIEKPIIE…EHFKLFMSLT (228 aa)) are alpha N-terminal domain (alpha-NTD). An alpha C-terminal domain (alpha-CTD) region spans residues 245 to 315 (KEKVLEMTVE…LGLALKLTEE (71 aa)).

Belongs to the RNA polymerase alpha chain family. In terms of assembly, homodimer. The RNAP catalytic core consists of 2 alpha, 1 beta, 1 beta' and 1 omega subunit. When a sigma factor is associated with the core the holoenzyme is formed, which can initiate transcription.

The catalysed reaction is RNA(n) + a ribonucleoside 5'-triphosphate = RNA(n+1) + diphosphate. Functionally, DNA-dependent RNA polymerase catalyzes the transcription of DNA into RNA using the four ribonucleoside triphosphates as substrates. This Clostridium beijerinckii (strain ATCC 51743 / NCIMB 8052) (Clostridium acetobutylicum) protein is DNA-directed RNA polymerase subunit alpha.